The following is a 325-amino-acid chain: ATP synthase gamma chain (325 aa).

It belongs to the ATPase gamma chain family. In terms of assembly, F-type ATPases have 2 components, CF(1) - the catalytic core - and CF(0) - the membrane proton channel. CF(1) has five subunits: alpha(3), beta(3), gamma(1), delta(1), epsilon(1). CF(0) has three main subunits: a, b and c.

It is found in the cell membrane. In terms of biological role, produces ATP from ADP in the presence of a proton gradient across the membrane. The gamma chain is believed to be important in regulating ATPase activity and the flow of protons through the CF(0) complex. The polypeptide is ATP synthase gamma chain (Corynebacterium glutamicum (strain ATCC 13032 / DSM 20300 / JCM 1318 / BCRC 11384 / CCUG 27702 / LMG 3730 / NBRC 12168 / NCIMB 10025 / NRRL B-2784 / 534)).